Here is a 1022-residue protein sequence, read N- to C-terminus: rDNA transcriptional regulator POL5 (1022 aa).

Acidic residues-rich tracts occupy residues 706–719 (EEFEEIKEENDASE), 728–748 (SESESESDSDDADEKDEEDEA), and 781–802 (DLDQLEGLSDDGGDDEDEESMD). 2 disordered regions span residues 706-748 (EEFE…EDEA) and 778-805 (GEVDLDQLEGLSDDGGDDEDEESMDDEK). A Phosphoserine modification is found at Ser789.

Belongs to the MYBBP1A family. In terms of assembly, interacts with FRK1.

It localises to the nucleus. It is found in the nucleolus. It catalyses the reaction DNA(n) + a 2'-deoxyribonucleoside 5'-triphosphate = DNA(n+1) + diphosphate. Its activity is regulated as follows. Stimulated by PCNA and inhibited by aphidicolin. Its function is as follows. Plays an important role in the regulation of rRNA transcription. Binds near or at the enhancer region of rRNA repeating units. May have DNA polymerase activity, but it is not required for in vivo function. In Saccharomyces cerevisiae (strain ATCC 204508 / S288c) (Baker's yeast), this protein is rDNA transcriptional regulator POL5.